The sequence spans 130 residues: MTLLDPLANALSHITNSERVGKKEVYIKPASKLIGEVLRVMQENGYIGEFEFIDDGRAGIYRVQLIGKINKAGAIKPRFPVKAKNYEYWEKRFLPAFEFGILIVSTSQGVMTHKEAREKGIGGRLIAYVY.

This sequence belongs to the universal ribosomal protein uS8 family. In terms of assembly, part of the 30S ribosomal subunit.

In terms of biological role, one of the primary rRNA binding proteins, it binds directly to 16S rRNA central domain where it helps coordinate assembly of the platform of the 30S subunit. The chain is Small ribosomal subunit protein uS8 from Thermococcus gammatolerans (strain DSM 15229 / JCM 11827 / EJ3).